Reading from the N-terminus, the 233-residue chain is Adenosine 5'-phosphosulfate reductase 1 (233 aa).

Residues Cys120, Cys121, Cys203, and Cys206 each contribute to the [4Fe-4S] cluster site. Cys229 (nucleophile; cysteine thiosulfonate intermediate) is an active-site residue.

The protein belongs to the PAPS reductase family. CysH subfamily. It depends on [4Fe-4S] cluster as a cofactor.

It localises to the cytoplasm. It catalyses the reaction [thioredoxin]-disulfide + sulfite + AMP + 2 H(+) = adenosine 5'-phosphosulfate + [thioredoxin]-dithiol. It participates in sulfur metabolism; hydrogen sulfide biosynthesis; sulfite from sulfate. In terms of biological role, catalyzes the formation of sulfite from adenosine 5'-phosphosulfate (APS) using thioredoxin as an electron donor. This chain is Adenosine 5'-phosphosulfate reductase 1 (cysH), found in Bacillus subtilis (strain 168).